The primary structure comprises 156 residues: Probable chemoreceptor glutamine deamidase CheD (156 aa).

This sequence belongs to the CheD family.

It carries out the reaction L-glutaminyl-[protein] + H2O = L-glutamyl-[protein] + NH4(+). Functionally, probably deamidates glutamine residues to glutamate on methyl-accepting chemotaxis receptors (MCPs), playing an important role in chemotaxis. In Sulfurimonas denitrificans (strain ATCC 33889 / DSM 1251) (Thiomicrospira denitrificans (strain ATCC 33889 / DSM 1251)), this protein is Probable chemoreceptor glutamine deamidase CheD.